The following is a 541-amino-acid chain: Putative transferase YhbX (541 aa).

Topologically, residues 1-60 (MTVFNKFARTFKSHWLLYLCVIVFGITNLVASSGAHMVQRLLFFVLTILVVKRISSLPLR) are periplasmic. Residues 61–81 (LLVAAPFVLLTAADMSISLYS) form a helical membrane-spanning segment. Topologically, residues 82-110 (WCTFGTTFNDGFAISVLQSDPDEVVKMLG) are cytoplasmic. Residues 111-131 (MYIPYLCAFAFLSLLFLAVII) form a helical membrane-spanning segment. Over 132–141 (KYDVSLPTKK) the chain is Periplasmic. The helical transmembrane segment at 142 to 162 (VTGILLLIVISGSLFSACQFA) threads the bilayer. The Cytoplasmic segment spans residues 163 to 264 (YKDAKNKKAF…RKQIKLFNQA (102 aa)). A helical membrane pass occupies residues 265–285 (ISGAPYTALSVPLSLTADSVL). The Periplasmic portion of the chain corresponds to 286-541 (SHDIHNYPDN…QGNPTPEGQG (256 aa)).

The protein belongs to the phosphoethanolamine transferase family.

The protein localises to the cell inner membrane. Functionally, probably does not transfer phosphoethanolamine to lipid A. This Escherichia coli (strain K12) protein is Putative transferase YhbX (yhbX).